The primary structure comprises 939 residues: Valine--tRNA ligase (939 aa).

The short motif at 47-57 (PNVTGILHMGH) is the 'HIGH' region element. The 'KMSKS' region signature appears at 563-567 (KLSKS). K566 contributes to the ATP binding site. Positions 874–939 (EHLAKERVRL…QSILDKLASL (66 aa)) form a coiled coil.

It belongs to the class-I aminoacyl-tRNA synthetase family. ValS type 1 subfamily. Monomer.

Its subcellular location is the cytoplasm. The catalysed reaction is tRNA(Val) + L-valine + ATP = L-valyl-tRNA(Val) + AMP + diphosphate. Its function is as follows. Catalyzes the attachment of valine to tRNA(Val). As ValRS can inadvertently accommodate and process structurally similar amino acids such as threonine, to avoid such errors, it has a 'posttransfer' editing activity that hydrolyzes mischarged Thr-tRNA(Val) in a tRNA-dependent manner. The protein is Valine--tRNA ligase of Chlamydia trachomatis serovar L2 (strain ATCC VR-902B / DSM 19102 / 434/Bu).